The following is a 1862-amino-acid chain: MANLEESFPRGGTRKLHKSEKSSQQVVEQDNLFDVSTEEGPIKRKKSQKGPAKTKKLKIEKRKSIKSIKEKFEILSLESLCEGMRILGCVKEVSELELVVSLPNGLQGFVQVTEVCDAYTQKLNEQVAQEEPLEDLLRLPELFSPGMLVRCVVSSLDVTESGKKSVKLSVNPKRVNKVLSADALRPGMLLTGTVSSLEDHGYLVDIGVGGTRAFLSLKKAQEYIRQKNKGAKFKVGQYLTCVVEEVKSNGGVVSLSVEHSEVSSAFATEEQSWNLNNLLPGLLVKAQVQKVTQFGLQLNFLTFFKGLVDFMHLEPKKMGSYSSNQTVKACILCVHPRTRVVRLSLRPIFLHPGRPLTRISYQQLGAVLDDVPVQGFFKNAGAIFRLKDGVLAYARVSHLSDSKKAFNAEAFKPGSTHKCRIIDYSQMDELALLSLRKSIIAAPFLRYHDIKIGTVVKGTVLAIKPFGILVKVGEQIKGLVPSMHLADIMMKNPEKKYSPGDEVKCRVLLCDPEAKKLIMTLKKTLVTSKLSLITCYEGAKPGLQTHGVIIRVKDYGCIVKFYNDVQGLVPKHELSTQHIPDPETVFYTGQVVKVAVLSCEPSKERMLLSFRLLSDSRPKDPGVESSQKKTGAVRIGQLVDVKVLEKTKTGLEVAILPHNTPAFLPTPHLSDHAANGPLLHHWLQTGDTLHRVLCLSQSERHILLCRKPALVSTVEGGQDPKSLSEIQPGMLLIGFVKCIKEYGVFVQFPSGLSGLSPKTIMSDKFVTTPSEHFVEGQTVVAKVTNVDESKQRMLLSLRLSDCSLGDSASTSFLLLCQCLEELQGIRSLMSNQDSVLIQTLADMTPGMVLDAVVHEVLEDGSVVFSSDPVPDLVLRASRYHRAGQEVEPGQKKKVVVLHVDMLKLEVHVSLHQDLVNRKTRKLRKSSRHQGIVQHLEESFAVASLVETGHLVAFSLISHLNDTFHFDSEKLRVGQGVCLTLKTTEPGVTGLILAVEGPASKRTRMPVQRDSETVDDKGEEKEEEEEEEEKEEENLTVKSKKRHSLAIGDKVTGTIKAVKATHVVVTLADGFVGCIHASRILDDVPVGTSPTTTLKAGKKVTARVIGGRDVKTSKFLPISHPRFVLTILELSVRPSELKGSYSALNTHSESPVEKIRQYQAGQTVTCFFKKYNVMKKWLEVDIGPDIRGRIPLLLTSLSFKVLKHPDKKFQVGQAIEATVVDPDVPRAFLCLSLIGPYRLEEGEVAMGRVMKVVPNRGLTVSFPFGKIGKVSMFHLSDSYSEAPLEDFCPQKIVRCYILSTAHRVLALSLRSSRTNRETKNRIEDPEINSIEDVKEGQLLRGYVKCVLPSSVIIGLGPSVLGLAKYSHVSECVPPEKELYNGCLPEGKLVTAKVLRVNPMKNLIELSLLPSDTGRPDVFSPAPEPKQEERSGGAEEGQKRKEKNQKRREEKEEPQKSQRGGRGKRERQESESEQELVNKRPKKSGAAEEDDSGVEVYYREGEDEVGEPKLPPRGKQTKSTEVPRLHLSSGFLWDVGLDSLTPALPLREESSDSEDEQPHQAKKKKGKKERELEKQKAEKELSRIEEALMDPGRQPESADDFDRLVLSSPNSSILWLQYMAFHLQATEIEKARAVAERALKTISFREEQEKLNVWVALLNLENMYGSQESLTKVFERAVQYNEPLKVFLHLADIYTKSEKYKEAGELYNRMLKRFRQEKAVWIKYGAFVLGRSQAGASHRVLQRALECLPAKEHVDVIVKFAQLEFQLGDVERAKAIFENTLSTYPKRTDVWSVYIDMTIKHGSQTAVRDIFERVIHLSLAPKRMKFFFKRYLDYEKQHGTEKDVQAVKAKALEYVEAKSSALED.

Positions 1–56 are disordered; that stretch reads MANLEESFPRGGTRKLHKSEKSSQQVVEQDNLFDVSTEEGPIKRKKSQKGPAKTKK. The residue at position 2 (Ala2) is an N-acetylalanine. The residue at position 7 (Ser7) is a Phosphoserine. Residues 43-56 are compositionally biased toward basic residues; that stretch reads KRKKSQKGPAKTKK. S1 motif domains lie at 83–171, 187–258, 281–346, and 365–436; these read GMRI…LSVN, GMLL…LSVE, GLLV…LSLR, and GAVL…LSLR. A Phosphoserine modification is found at Ser438. S1 motif domains follow at residues 453–522, 542–611, 636–707, 729–798, and 846–911; these read GTVV…MTLK, GLQT…LSFR, GQLV…LCRK, GMLL…LSLR, and GMVL…VSLH. Positions 999-1036 are disordered; that stretch reads SKRTRMPVQRDSETVDDKGEEKEEEEEEEEKEEENLTV. Residues 1006 to 1019 are compositionally biased toward basic and acidic residues; sequence VQRDSETVDDKGEE. Residues 1020–1033 show a composition bias toward acidic residues; it reads KEEEEEEEEKEEEN. S1 motif domains follow at residues 1047-1120, 1160-1233, 1241-1309, and 1335-1407; these read GDKV…ISHP, GQTV…LSLI, GEVA…LSLR, and GQLL…LSLL. 2 disordered regions span residues 1406-1520 and 1545-1577; these read LLPS…STEV and REESSDSEDEQPHQAKKKKGKKERELEKQKAEK. 2 stretches are compositionally biased toward basic and acidic residues: residues 1423-1437 and 1445-1454; these read PKQEERSGGAEEGQK and RREEKEEPQK. A Glycyl lysine isopeptide (Lys-Gly) (interchain with G-Cter in SUMO2) cross-link involves residue Lys1424. 2 positions are modified to phosphoserine: Ser1468 and Ser1490. Residues 1566–1577 show a composition bias toward basic and acidic residues; the sequence is KERELEKQKAEK. 4 HAT repeats span residues 1590–1622, 1696–1728, 1766–1798, and 1800–1835; these read GRQPESADDFDRLVLSSPNSSILWLQYMAFHLQ, EKYKEAGELYNRMLKRFRQEKAVWIKYGAFVLG, GDVERAKAIFENTLSTYPKRTDVWSVYIDMTIK, and GSQTAVRDIFERVIHLSLAPKRMKFFFKRYLDYEKQ.

In terms of assembly, interacts with NF-kappa-B p50/NFKB1 and NF-kappa-B p65/RELA. As to expression, ubiquitous.

The protein resides in the nucleus. The protein localises to the nucleolus. In terms of biological role, essential for the generation of mature 18S rRNA, specifically necessary for cleavages at sites A0, 1 and 2 of the 47S precursor. Directly interacts with U3 snoRNA. This Mus musculus (Mouse) protein is Protein RRP5 homolog (Pdcd11).